We begin with the raw amino-acid sequence, 399 residues long: MTSRFGHSHHPRRGRSARARAGRREGVQSNFPATQVLERSAHSLPARERTALVMAGGTGGHIFPGLALAEALRERGWQVHWLGTPGSMEERLVPPRGFAFEPIDFSGVRGKGLKTLLALPLRLARACLQARAVVRRLQPDVVIGLGGYVTFPGGIAARLARKPLLLHEQNSVPGMANKLLSRLATRVYTAFPNVLPDAQWVGNPMRRAFTRQPRPERRLAGREGPLRLLVVGGSLGAKALNDIVPQALAWIHEQDRPIVTHQSGESQIEALRRSYAAAGVEATLTPFIEDTAAAFAEADLVLCRAGASTVTEIAAVGAAAVFVPFPHAVDDHQTTNAQYLVKVGGGWLVQQADLTAHGLAEMLQNMKRQDLLAKAQKARTMRKINATRDIVAACERLAR.

A compositionally biased stretch (basic residues) spans 1-21 (MTSRFGHSHHPRRGRSARARA). A disordered region spans residues 1-30 (MTSRFGHSHHPRRGRSARARAGRREGVQSN). UDP-N-acetyl-alpha-D-glucosamine is bound by residues 58–60 (TGG), asparagine 170, arginine 206, serine 234, isoleucine 288, and glutamine 333.

This sequence belongs to the glycosyltransferase 28 family. MurG subfamily.

It localises to the cell inner membrane. The catalysed reaction is di-trans,octa-cis-undecaprenyl diphospho-N-acetyl-alpha-D-muramoyl-L-alanyl-D-glutamyl-meso-2,6-diaminopimeloyl-D-alanyl-D-alanine + UDP-N-acetyl-alpha-D-glucosamine = di-trans,octa-cis-undecaprenyl diphospho-[N-acetyl-alpha-D-glucosaminyl-(1-&gt;4)]-N-acetyl-alpha-D-muramoyl-L-alanyl-D-glutamyl-meso-2,6-diaminopimeloyl-D-alanyl-D-alanine + UDP + H(+). It functions in the pathway cell wall biogenesis; peptidoglycan biosynthesis. Cell wall formation. Catalyzes the transfer of a GlcNAc subunit on undecaprenyl-pyrophosphoryl-MurNAc-pentapeptide (lipid intermediate I) to form undecaprenyl-pyrophosphoryl-MurNAc-(pentapeptide)GlcNAc (lipid intermediate II). This is UDP-N-acetylglucosamine--N-acetylmuramyl-(pentapeptide) pyrophosphoryl-undecaprenol N-acetylglucosamine transferase from Acidovorax ebreus (strain TPSY) (Diaphorobacter sp. (strain TPSY)).